Reading from the N-terminus, the 451-residue chain is tRNA modification GTPase MnmE (451 aa).

The (6S)-5-formyl-5,6,7,8-tetrahydrofolate site is built by Arg23, Glu80, and Lys119. One can recognise a TrmE-type G domain in the interval 215–372 (GIKVVLAGQP…LRAALLKTAG (158 aa)). Asn225 contributes to the K(+) binding site. Residues 225-230 (NVGKSS), 244-250 (TDIPGTT), and 269-272 (DTAG) contribute to the GTP site. Ser229 serves as a coordination point for Mg(2+). Residues Thr244, Ile246, and Thr249 each contribute to the K(+) site. Residue Thr250 coordinates Mg(2+). Residue Lys451 coordinates (6S)-5-formyl-5,6,7,8-tetrahydrofolate.

Belongs to the TRAFAC class TrmE-Era-EngA-EngB-Septin-like GTPase superfamily. TrmE GTPase family. In terms of assembly, homodimer. Heterotetramer of two MnmE and two MnmG subunits. The cofactor is K(+).

The protein localises to the cytoplasm. In terms of biological role, exhibits a very high intrinsic GTPase hydrolysis rate. Involved in the addition of a carboxymethylaminomethyl (cmnm) group at the wobble position (U34) of certain tRNAs, forming tRNA-cmnm(5)s(2)U34. This Nitrosomonas europaea (strain ATCC 19718 / CIP 103999 / KCTC 2705 / NBRC 14298) protein is tRNA modification GTPase MnmE.